The sequence spans 351 residues: Secreted frizzled-related sequence protein 4 (351 aa).

An N-terminal signal peptide occupies residues 1-18; that stretch reads MLRSILVALCLWLRLALG. The FZ domain maps to 19-139; that stretch reads VRGAPCEAVR…VYDRGVCISP (121 aa). Cystine bridges form between Cys24–Cys85, Cys32–Cys78, Cys69–Cys108, Cys97–Cys136, and Cys101–Cys125. N-linked (GlcNAc...) asparagine glycosylation is found at Asn38 and Asn68. N-linked (GlcNAc...) asparagine glycosylation is found at Asn116, Asn194, and Asn240. Residues 178–306 enclose the NTR domain; it reads CKCKKVKPTL…TIQDKKQIAS (129 aa). Over residues 293–303 the composition is skewed to basic and acidic residues; it reads EQQRTIQDKKQ. Residues 293-351 form a disordered region; sequence EQQRTIQDKKQIASRTSRTSRSNPPKSKGRPPAPKPASPKKNIKARSAPKKSNLKKSAS. Low complexity predominate over residues 306–318; that stretch reads SRTSRTSRSNPPK. Positions 333-351 are enriched in basic residues; that stretch reads KNIKARSAPKKSNLKKSAS.

It belongs to the secreted frizzled-related protein (sFRP) family. Expressed in the ovary. Localized to granulosa cells of periovulatory follicles and corpora lutea. Weakly expressed in adult tissues including kidney, brain and lung.

The protein resides in the secreted. Its function is as follows. Soluble frizzled-related proteins (sFRPS) function as modulators of Wnt signaling through direct interaction with Wnts. They have a role in regulating cell growth and differentiation in specific cell types. SFRP4 plays a role in bone morphogenesis. May also act as a regulator of adult uterine morphology and function. May also increase apoptosis during ovulation possibly through modulation of FZ1/FZ4/WNT4 signaling. Has phosphaturic effects by specifically inhibiting sodium-dependent phosphate uptake. The polypeptide is Secreted frizzled-related sequence protein 4 (Sfrp4) (Mus musculus (Mouse)).